Consider the following 406-residue polypeptide: MEGMRRPTPTVYVGRVPIGGAHPIAVQSMTNTPTRDVEATTAQVLELHRAGSEIVRLTVNDEEAAKAVPEIKRRLLAEGAEVPLVGDFHFNGHLLLRKYPKMAEALDKFRINPGTLGRGRHKDEHFAEMIRIAMDLGKPVRIGANWGSLDPALLTELMDRNARRPEPKSAHEVVLEALVESAVRAYEAALEMGLGEDKLVLSAKVSKARDLVWVYRELARRTQAPLHLGLTEAGMGVKGIVASAAALAPLLLEGIGDTIRVSLTPAPGEPRTKEVEVAQEILQALGLRAFAPEVTSCPGCGRTTSTFFQELAEEVSRRLKERLPEWRARYPGVEELKVAVMGCVVNGPGESKHAHIGISLPGAGEEPKAPVYADGKLLTILKGEGIAEEFLRLVEDYVKTRFAPKA.

4 residues coordinate [4Fe-4S] cluster: C297, C300, C343, and E350.

This sequence belongs to the IspG family. The cofactor is [4Fe-4S] cluster.

The catalysed reaction is (2E)-4-hydroxy-3-methylbut-2-enyl diphosphate + oxidized [flavodoxin] + H2O + 2 H(+) = 2-C-methyl-D-erythritol 2,4-cyclic diphosphate + reduced [flavodoxin]. Its pathway is isoprenoid biosynthesis; isopentenyl diphosphate biosynthesis via DXP pathway; isopentenyl diphosphate from 1-deoxy-D-xylulose 5-phosphate: step 5/6. Converts 2C-methyl-D-erythritol 2,4-cyclodiphosphate (ME-2,4cPP) into 1-hydroxy-2-methyl-2-(E)-butenyl 4-diphosphate. This Thermus thermophilus (strain ATCC 27634 / DSM 579 / HB8) protein is 4-hydroxy-3-methylbut-2-en-1-yl diphosphate synthase (flavodoxin).